The sequence spans 156 residues: Ribosomal RNA large subunit methyltransferase H (156 aa).

S-adenosyl-L-methionine contacts are provided by residues Leu73, Gly104, and 123–128 (LSPLTL).

Belongs to the RNA methyltransferase RlmH family. As to quaternary structure, homodimer.

It is found in the cytoplasm. The catalysed reaction is pseudouridine(1915) in 23S rRNA + S-adenosyl-L-methionine = N(3)-methylpseudouridine(1915) in 23S rRNA + S-adenosyl-L-homocysteine + H(+). In terms of biological role, specifically methylates the pseudouridine at position 1915 (m3Psi1915) in 23S rRNA. The chain is Ribosomal RNA large subunit methyltransferase H from Sodalis glossinidius (strain morsitans).